We begin with the raw amino-acid sequence, 303 residues long: 1D-myo-inositol 2-acetamido-2-deoxy-alpha-D-glucopyranoside deacetylase (303 aa).

Zn(2+) is bound by residues His-15, Asp-18, and His-157.

It belongs to the MshB deacetylase family. Zn(2+) serves as cofactor.

The catalysed reaction is 1D-myo-inositol 2-acetamido-2-deoxy-alpha-D-glucopyranoside + H2O = 1D-myo-inositol 2-amino-2-deoxy-alpha-D-glucopyranoside + acetate. Catalyzes the deacetylation of 1D-myo-inositol 2-acetamido-2-deoxy-alpha-D-glucopyranoside (GlcNAc-Ins) in the mycothiol biosynthesis pathway. The chain is 1D-myo-inositol 2-acetamido-2-deoxy-alpha-D-glucopyranoside deacetylase from Kribbella flavida (strain DSM 17836 / JCM 10339 / NBRC 14399).